The following is a 96-amino-acid chain: UPF0235 protein VC_0458 (96 aa).

This sequence belongs to the UPF0235 family.

This Vibrio cholerae serotype O1 (strain ATCC 39315 / El Tor Inaba N16961) protein is UPF0235 protein VC_0458.